Consider the following 376-residue polypeptide: Ribosomal RNA large subunit methyltransferase G (376 aa).

Belongs to the methyltransferase superfamily. RlmG family.

The protein localises to the cytoplasm. It carries out the reaction guanosine(1835) in 23S rRNA + S-adenosyl-L-methionine = N(2)-methylguanosine(1835) in 23S rRNA + S-adenosyl-L-homocysteine + H(+). Its function is as follows. Specifically methylates the guanine in position 1835 (m2G1835) of 23S rRNA. In Cronobacter sakazakii (strain ATCC BAA-894) (Enterobacter sakazakii), this protein is Ribosomal RNA large subunit methyltransferase G.